The following is a 567-amino-acid chain: Oxygen-dependent choline dehydrogenase (567 aa).

4-33 (DYIIIGAGSAGNVLAARLTEDADVTVLLLE) contributes to the FAD binding site. The active-site Proton acceptor is the histidine 473.

The protein belongs to the GMC oxidoreductase family. It depends on FAD as a cofactor.

The enzyme catalyses choline + A = betaine aldehyde + AH2. The catalysed reaction is betaine aldehyde + NAD(+) + H2O = glycine betaine + NADH + 2 H(+). It participates in amine and polyamine biosynthesis; betaine biosynthesis via choline pathway; betaine aldehyde from choline (cytochrome c reductase route): step 1/1. Involved in the biosynthesis of the osmoprotectant glycine betaine. Catalyzes the oxidation of choline to betaine aldehyde and betaine aldehyde to glycine betaine at the same rate. The protein is Oxygen-dependent choline dehydrogenase of Yersinia pestis bv. Antiqua (strain Antiqua).